The sequence spans 48 residues: Cuticle protein 10 (48 aa).

The protein is Cuticle protein 10 of Limulus polyphemus (Atlantic horseshoe crab).